The sequence spans 286 residues: Pantothenate synthetase (286 aa).

30–37 serves as a coordination point for ATP; sequence MGNLHSGH. Histidine 37 acts as the Proton donor in catalysis. Residue glutamine 61 coordinates (R)-pantoate. Glutamine 61 contributes to the beta-alanine binding site. Residue 149 to 152 participates in ATP binding; it reads GQKD. Residue glutamine 155 participates in (R)-pantoate binding. ATP-binding positions include valine 178 and 186-189; that span reads LSSR.

It belongs to the pantothenate synthetase family. In terms of assembly, homodimer.

Its subcellular location is the cytoplasm. The enzyme catalyses (R)-pantoate + beta-alanine + ATP = (R)-pantothenate + AMP + diphosphate + H(+). The protein operates within cofactor biosynthesis; (R)-pantothenate biosynthesis; (R)-pantothenate from (R)-pantoate and beta-alanine: step 1/1. Its function is as follows. Catalyzes the condensation of pantoate with beta-alanine in an ATP-dependent reaction via a pantoyl-adenylate intermediate. In Pseudomonas fluorescens (strain ATCC BAA-477 / NRRL B-23932 / Pf-5), this protein is Pantothenate synthetase.